A 350-amino-acid polypeptide reads, in one-letter code: Heat-inducible transcription repressor HrcA (350 aa).

Belongs to the HrcA family.

Its function is as follows. Negative regulator of class I heat shock genes (grpE-dnaK-dnaJ and groELS operons). Prevents heat-shock induction of these operons. The polypeptide is Heat-inducible transcription repressor HrcA (Ligilactobacillus salivarius (strain UCC118) (Lactobacillus salivarius)).